Consider the following 509-residue polypeptide: ATP synthase subunit alpha (509 aa).

Residue 169 to 176 coordinates ATP; it reads GDRQTGKT.

It belongs to the ATPase alpha/beta chains family. F-type ATPases have 2 components, CF(1) - the catalytic core - and CF(0) - the membrane proton channel. CF(1) has five subunits: alpha(3), beta(3), gamma(1), delta(1), epsilon(1). CF(0) has three main subunits: a(1), b(2) and c(9-12). The alpha and beta chains form an alternating ring which encloses part of the gamma chain. CF(1) is attached to CF(0) by a central stalk formed by the gamma and epsilon chains, while a peripheral stalk is formed by the delta and b chains.

The protein localises to the cell inner membrane. The catalysed reaction is ATP + H2O + 4 H(+)(in) = ADP + phosphate + 5 H(+)(out). In terms of biological role, produces ATP from ADP in the presence of a proton gradient across the membrane. The alpha chain is a regulatory subunit. The sequence is that of ATP synthase subunit alpha from Agrobacterium fabrum (strain C58 / ATCC 33970) (Agrobacterium tumefaciens (strain C58)).